Consider the following 245-residue polypeptide: Chymotrypsin B (245 aa).

5 disulfide bridges follow: C1-C121, C42-C58, C135-C201, C167-C182, and C191-C220. Positions 14–15 (AR) are excised as a propeptide. The Peptidase S1 domain maps to 16–243 (IVNGEEAVPH…LRGWVDQILA (228 aa)). Catalysis depends on charge relay system residues H57 and D101. S195 serves as the catalytic Charge relay system.

Belongs to the peptidase S1 family.

The protein resides in the secreted. Its subcellular location is the extracellular space. The catalysed reaction is Preferential cleavage: Tyr-|-Xaa, Trp-|-Xaa, Phe-|-Xaa, Leu-|-Xaa.. The protein is Chymotrypsin B of Gadus morhua (Atlantic cod).